The primary structure comprises 245 residues: DNA polymerase zeta processivity subunit (245 aa).

An HORMA domain is found at 3 to 203 (RWVEKWLRVY…PPKIKLTSLV (201 aa)).

The protein belongs to the MAD2 family. In terms of assembly, forms DNA polymerase zeta with REV3. Interacts with REV1.

Its subcellular location is the mitochondrion. Its function is as follows. Required for DNA damage induced mutagenesis. Involved in DNA repair, mitochondrial DNA repair and translesion synthesis. Has a role in the bypass of abasic (AP) sites. The protein is DNA polymerase zeta processivity subunit (REV7) of Saccharomyces cerevisiae (strain ATCC 204508 / S288c) (Baker's yeast).